We begin with the raw amino-acid sequence, 151 residues long: Nucleoside diphosphate kinase (151 aa).

Residues Lys11, Phe59, Arg87, Arg104, and Asn114 each contribute to the ATP site. Residue His117 is the Pros-phosphohistidine intermediate of the active site.

Belongs to the NDK family. Homotrimer. The cofactor is Mg(2+).

It catalyses the reaction a 2'-deoxyribonucleoside 5'-diphosphate + ATP = a 2'-deoxyribonucleoside 5'-triphosphate + ADP. The enzyme catalyses a ribonucleoside 5'-diphosphate + ATP = a ribonucleoside 5'-triphosphate + ADP. Major role in the synthesis of nucleoside triphosphates other than ATP. The ATP gamma phosphate is transferred to the NDP beta phosphate via a ping-pong mechanism, using a phosphorylated active-site intermediate. In Schizosaccharomyces pombe (strain 972 / ATCC 24843) (Fission yeast), this protein is Nucleoside diphosphate kinase (ndk1).